A 433-amino-acid polypeptide reads, in one-letter code: Enolase (433 aa).

Q167 is a (2R)-2-phosphoglycerate binding site. The active-site Proton donor is the E209. 3 residues coordinate Mg(2+): D246, E291, and D318. Residues K343, R372, S373, and K394 each coordinate (2R)-2-phosphoglycerate. K343 functions as the Proton acceptor in the catalytic mechanism.

Belongs to the enolase family. In terms of assembly, component of the RNA degradosome, a multiprotein complex involved in RNA processing and mRNA degradation. Mg(2+) is required as a cofactor.

Its subcellular location is the cytoplasm. The protein resides in the secreted. The protein localises to the cell surface. It catalyses the reaction (2R)-2-phosphoglycerate = phosphoenolpyruvate + H2O. Its pathway is carbohydrate degradation; glycolysis; pyruvate from D-glyceraldehyde 3-phosphate: step 4/5. In terms of biological role, catalyzes the reversible conversion of 2-phosphoglycerate (2-PG) into phosphoenolpyruvate (PEP). It is essential for the degradation of carbohydrates via glycolysis. The sequence is that of Enolase from Edwardsiella ictaluri (strain 93-146).